Consider the following 154-residue polypeptide: Protein X (154 aa).

The interval 68–117 (PCALRFTSARRMETTVNAHQVLPKVLHKRTLGLSAMSTTDLEAYFKDCLF) is mitochondrial targeting sequence.

It belongs to the orthohepadnavirus protein X family. May form homodimer. May interact with host CEBPA, CFLAR, CREB1, DDB1, E4F1, HBXIP, HSPD1/HSP60, NFKBIA, POLR2E and SMAD4. Interacts with host SMC5-SMC6 complex and induces its degradation. Interacts with host TRPC4AP; leading to prevent ubiquitination of TRPC4AP. Interacts with host PLSCR1; this interaction promotes ubiquitination and degradation of HBx and impairs HBx-mediated cell proliferation. A fraction may be phosphorylated in insect cells and HepG2 cells, a human hepatoblastoma cell line. Phosphorylated in vitro by host protein kinase C or mitogen-activated protein kinase. N-acetylated in insect cells.

It is found in the host cytoplasm. It localises to the host nucleus. The protein resides in the host mitochondrion. Functionally, multifunctional protein that plays a role in silencing host antiviral defenses and promoting viral transcription. Does not seem to be essential for HBV infection. May be directly involved in development of cirrhosis and liver cancer (hepatocellular carcinoma). Most of cytosolic activities involve modulation of cytosolic calcium. The effect on apoptosis is controversial depending on the cell types in which the studies have been conducted. May induce apoptosis by localizing in mitochondria and causing loss of mitochondrial membrane potential. May also modulate apoptosis by binding host CFLAR, a key regulator of the death-inducing signaling complex (DISC). Promotes viral transcription by using the host E3 ubiquitin ligase DDB1 to target the SMC5-SMC6 complex to proteasomal degradation. This host complex would otherwise bind to viral episomal DNA, and prevents its transcription. Moderately stimulates transcription of many different viral and cellular transcription elements. Promoters and enhancers stimulated by HBx contain DNA binding sites for NF-kappa-B, AP-1, AP-2, c-EBP, ATF/CREB, or the calcium-activated factor NF-AT. This is Protein X from Hepatitis B virus genotype C subtype adr (isolate Japan/Nishioka/1983) (HBV-C).